A 294-amino-acid polypeptide reads, in one-letter code: Acetyl-coenzyme A carboxylase carboxyl transferase subunit beta (294 aa).

Positions 29-294 constitute a CoA carboxyltransferase N-terminal domain; it reads LWEKCPECGQ…TQEVKLQTNA (266 aa). Zn(2+) contacts are provided by C33, C36, C52, and C55. The C4-type zinc finger occupies 33-55; it reads CPECGQVVYRKDLIDNCSVCSNC.

The protein belongs to the AccD/PCCB family. In terms of assembly, acetyl-CoA carboxylase is a heterohexamer composed of biotin carboxyl carrier protein (AccB), biotin carboxylase (AccC) and two subunits each of ACCase subunit alpha (AccA) and ACCase subunit beta (AccD). Requires Zn(2+) as cofactor.

It is found in the cytoplasm. The catalysed reaction is N(6)-carboxybiotinyl-L-lysyl-[protein] + acetyl-CoA = N(6)-biotinyl-L-lysyl-[protein] + malonyl-CoA. Its pathway is lipid metabolism; malonyl-CoA biosynthesis; malonyl-CoA from acetyl-CoA: step 1/1. Component of the acetyl coenzyme A carboxylase (ACC) complex. Biotin carboxylase (BC) catalyzes the carboxylation of biotin on its carrier protein (BCCP) and then the CO(2) group is transferred by the transcarboxylase to acetyl-CoA to form malonyl-CoA. The sequence is that of Acetyl-coenzyme A carboxylase carboxyl transferase subunit beta from Prochlorococcus marinus (strain NATL1A).